A 389-amino-acid chain; its full sequence is Gastricsin (389 aa).

A signal peptide spans 1 to 16 (MKWMVVVLLCLQLLEA). Positions 17-59 (KVVKVPLKKLKSLRETMKEKGLLEEFLKNHKYDPAQKYRYTDF) are cleaved as a propeptide — activation peptide. The Peptidase A1 domain occupies 73 to 386 (YFGEISIGTP…DMGNNRVGFA (314 aa)). D91 is an active-site residue. 2 cysteine pairs are disulfide-bonded: C104/C109 and C268/C272. D277 is a catalytic residue. A disulfide bridge connects residues C311 and C344.

It belongs to the peptidase A1 family.

The protein localises to the secreted. It carries out the reaction More restricted specificity than pepsin A, but shows preferential cleavage at Tyr-|-Xaa bonds. High activity on hemoglobin.. Its function is as follows. Hydrolyzes a variety of proteins. The chain is Gastricsin (PGC) from Rhinolophus ferrumequinum (Greater horseshoe bat).